We begin with the raw amino-acid sequence, 218 residues long: Phosphatidylserine decarboxylase proenzyme (218 aa).

Ser-187 serves as the catalytic Schiff-base intermediate with substrate; via pyruvic acid. Ser-187 is subject to Pyruvic acid (Ser); by autocatalysis.

Belongs to the phosphatidylserine decarboxylase family. PSD-A subfamily. As to quaternary structure, heterodimer of a large membrane-associated beta subunit and a small pyruvoyl-containing alpha subunit. The cofactor is pyruvate. Post-translationally, is synthesized initially as an inactive proenzyme. Formation of the active enzyme involves a self-maturation process in which the active site pyruvoyl group is generated from an internal serine residue via an autocatalytic post-translational modification. Two non-identical subunits are generated from the proenzyme in this reaction, and the pyruvate is formed at the N-terminus of the alpha chain, which is derived from the carboxyl end of the proenzyme. The post-translation cleavage follows an unusual pathway, termed non-hydrolytic serinolysis, in which the side chain hydroxyl group of the serine supplies its oxygen atom to form the C-terminus of the beta chain, while the remainder of the serine residue undergoes an oxidative deamination to produce ammonia and the pyruvoyl prosthetic group on the alpha chain.

It is found in the cell membrane. It carries out the reaction a 1,2-diacyl-sn-glycero-3-phospho-L-serine + H(+) = a 1,2-diacyl-sn-glycero-3-phosphoethanolamine + CO2. It functions in the pathway phospholipid metabolism; phosphatidylethanolamine biosynthesis; phosphatidylethanolamine from CDP-diacylglycerol: step 2/2. Catalyzes the formation of phosphatidylethanolamine (PtdEtn) from phosphatidylserine (PtdSer). This is Phosphatidylserine decarboxylase proenzyme from Geobacter sulfurreducens (strain ATCC 51573 / DSM 12127 / PCA).